Reading from the N-terminus, the 416-residue chain is MEKLYVEGNKILNGHVIISGSKNAALPILFMTILTEGKIKIGNIPNLTDINIALKLLVYLGVKITGNETLCIDASSINIFCPPYNLINKIRASIWILGPLLARFGKAKIFLPGGCKIGSRPIDLHLNGLTQLGATINLKNNCIDAYVKGRLQGKYILMEKISVGATITIMSAATLAKGSTIIDNAACEPEIVDIAKFLNTLGADIIGAGSNKICIKGVLKLTGGTHQVIPDRIETGTFLVAAAASQGHITCHKTEPKHLTNVLMKLTEAGAKIKTGKDWIKLDMRGKRPKSLNICTAPYPGFPTDMQAQFALLNSISKGIGTITETIFENRFIYTSELIRMGAKIKIKNNTIICYGIPKLISSNVFSSDLRASATLILAGCIAAGITIVNHTYHLVRGYESFPKKLNKIGANIKII.

Residue 22 to 23 participates in phosphoenolpyruvate binding; the sequence is KN. A UDP-N-acetyl-alpha-D-glucosamine-binding site is contributed by arginine 91. Cysteine 115 acts as the Proton donor in catalysis. Cysteine 115 is subject to 2-(S-cysteinyl)pyruvic acid O-phosphothioketal. UDP-N-acetyl-alpha-D-glucosamine contacts are provided by residues 120-124, aspartate 305, and isoleucine 327; that span reads RPIDL.

The protein belongs to the EPSP synthase family. MurA subfamily.

The protein resides in the cytoplasm. The enzyme catalyses phosphoenolpyruvate + UDP-N-acetyl-alpha-D-glucosamine = UDP-N-acetyl-3-O-(1-carboxyvinyl)-alpha-D-glucosamine + phosphate. Its pathway is cell wall biogenesis; peptidoglycan biosynthesis. Its function is as follows. Cell wall formation. Adds enolpyruvyl to UDP-N-acetylglucosamine. The protein is UDP-N-acetylglucosamine 1-carboxyvinyltransferase of Buchnera aphidicola subsp. Acyrthosiphon pisum (strain 5A).